The chain runs to 932 residues: RNA-binding protein 12 (932 aa).

The segment at 97–116 (IPPANASRSGPPPSSGMSGR) is disordered. The span at 98-116 (PPANASRSGPPPSSGMSGR) shows a compositional bias: low complexity. Positions 304-379 (LYVSVHGMPF…RYVEVSPATE (76 aa)) constitute an RRM 1 domain. Phosphoserine occurs at positions 352 and 375. Composition is skewed to polar residues over residues 392–401 (KQNMGPSGQT) and 408–417 (LPRSKSPSGQ). Positions 392–424 (KQNMGPSGQTHPPPQTLPRSKSPSGQKRSRSRS) are disordered. A phosphoserine mark is found at Ser-420, Ser-422, and Ser-424. In terms of domain architecture, RRM 2 spans 430-507 (FCVYLKGLPF…RFIQVHPITK (78 aa)). Position 525 is a phosphoserine (Ser-525). Residues 717-734 (NGPPFNFPGNFGGSNAFG) show a composition bias toward low complexity. The tract at residues 717–855 (NGPPFNFPGN…PGFASSSGKP (139 aa)) is disordered. Gly residues predominate over residues 783-811 (SGFGGGPQNFGNGPGSLGGPPGFGSGPPG). A compositionally biased stretch (pro residues) spans 824-838 (AFGPGPGPGPGPGPG). In terms of domain architecture, RRM 3 spans 856 to 932 (GPTVIKVQNM…PIGSRKVNLY (77 aa)).

It localises to the nucleus. This Pongo abelii (Sumatran orangutan) protein is RNA-binding protein 12 (RBM12).